The chain runs to 111 residues: uncharacterized protein (111 aa).

Residues 18–41 (FFYFFFISFYTLWIVFFLLHLSFF) form a helical membrane-spanning segment.

It is found in the membrane. This is an uncharacterized protein from Saccharomyces cerevisiae (strain ATCC 204508 / S288c) (Baker's yeast).